A 177-amino-acid chain; its full sequence is Crossover junction endodeoxyribonuclease RuvC (177 aa).

Active-site residues include D8, E72, and D144. Residues D8, E72, and D144 each contribute to the Mg(2+) site.

The protein belongs to the RuvC family. In terms of assembly, homodimer which binds Holliday junction (HJ) DNA. The HJ becomes 2-fold symmetrical on binding to RuvC with unstacked arms; it has a different conformation from HJ DNA in complex with RuvA. In the full resolvosome a probable DNA-RuvA(4)-RuvB(12)-RuvC(2) complex forms which resolves the HJ. Mg(2+) is required as a cofactor.

The protein resides in the cytoplasm. It carries out the reaction Endonucleolytic cleavage at a junction such as a reciprocal single-stranded crossover between two homologous DNA duplexes (Holliday junction).. In terms of biological role, the RuvA-RuvB-RuvC complex processes Holliday junction (HJ) DNA during genetic recombination and DNA repair. Endonuclease that resolves HJ intermediates. Cleaves cruciform DNA by making single-stranded nicks across the HJ at symmetrical positions within the homologous arms, yielding a 5'-phosphate and a 3'-hydroxyl group; requires a central core of homology in the junction. The consensus cleavage sequence is 5'-(A/T)TT(C/G)-3'. Cleavage occurs on the 3'-side of the TT dinucleotide at the point of strand exchange. HJ branch migration catalyzed by RuvA-RuvB allows RuvC to scan DNA until it finds its consensus sequence, where it cleaves and resolves the cruciform DNA. In Teredinibacter turnerae (strain ATCC 39867 / T7901), this protein is Crossover junction endodeoxyribonuclease RuvC.